A 499-amino-acid chain; its full sequence is Glutamyl-tRNA(Gln) amidotransferase subunit A, mitochondrial (499 aa).

Residues Lys61 and Ser139 each act as charge relay system in the active site. The active-site Acyl-ester intermediate is Ser163.

Belongs to the amidase family. GatA subfamily. In terms of assembly, subunit of the heterotrimeric GatCAB amidotransferase (AdT) complex, composed of A, B and C subunits.

The protein localises to the mitochondrion. The catalysed reaction is L-glutamyl-tRNA(Gln) + L-glutamine + ATP + H2O = L-glutaminyl-tRNA(Gln) + L-glutamate + ADP + phosphate + H(+). Functionally, allows the formation of correctly charged Gln-tRNA(Gln) through the transamidation of misacylated Glu-tRNA(Gln) in the mitochondria. The reaction takes place in the presence of glutamine and ATP through an activated gamma-phospho-Glu-tRNA(Gln). The sequence is that of Glutamyl-tRNA(Gln) amidotransferase subunit A, mitochondrial from Coccidioides posadasii (strain C735) (Valley fever fungus).